The sequence spans 162 residues: MSLVTQILLNADDELRYPTSGELETIKSFLKTGNKRISIINNIAQNEKKIIEQASKQLWQVHPEYISPGGNAYGARQRSLCLRDYGWYLRLVTYGILAGDQRPIEKIGIIGVREMYNSLGVPVIGMVDSITALKNSTLSVLSPEDSEEVKPYFDYIIQAMAA.

At Asn-71 the chain carries N4-methylasparagine. Cys-81 is a (2R,3E)-phycocyanobilin binding site.

This sequence belongs to the phycobiliprotein family. In terms of processing, contains one covalently linked phycocyanobilin chromophore.

It is found in the plastid. The protein resides in the cyanelle thylakoid membrane. In terms of biological role, allophycocyanin is a photosynthetic bile pigment-protein complex with maximum absorption at approximately 650 nanometers. The sequence is that of Allophycocyanin alpha-B chain (apcD) from Cyanophora paradoxa.